The sequence spans 160 residues: Phosphopantetheine adenylyltransferase (160 aa).

Ser9 contributes to the substrate binding site. Residues 9–10 (SF) and His17 each bind ATP. Positions 41, 73, and 87 each coordinate substrate. Residues 88 to 90 (GLR), Glu98, and 123 to 129 (YSYLSSS) each bind ATP.

The protein belongs to the bacterial CoaD family. As to quaternary structure, homohexamer. Requires Mg(2+) as cofactor.

It localises to the cytoplasm. The enzyme catalyses (R)-4'-phosphopantetheine + ATP + H(+) = 3'-dephospho-CoA + diphosphate. It functions in the pathway cofactor biosynthesis; coenzyme A biosynthesis; CoA from (R)-pantothenate: step 4/5. In terms of biological role, reversibly transfers an adenylyl group from ATP to 4'-phosphopantetheine, yielding dephospho-CoA (dPCoA) and pyrophosphate. The protein is Phosphopantetheine adenylyltransferase of Clostridium tetani (strain Massachusetts / E88).